We begin with the raw amino-acid sequence, 161 residues long: Allophycocyanin alpha chain (161 aa).

Position 71 is an N4-methylasparagine (Asn-71). A (2R,3E)-phycocyanobilin-binding site is contributed by Cys-81.

The protein belongs to the phycobiliprotein family. Heterodimer of an alpha and a beta chain. In terms of processing, contains one covalently linked phycocyanobilin chromophore.

It is found in the cellular thylakoid membrane. Its function is as follows. Light-harvesting photosynthetic bile pigment-protein from the phycobiliprotein complex. Allophycocyanin has a maximum absorption at approximately 650 nanometers. The protein is Allophycocyanin alpha chain (apcA) of Thermosynechococcus vestitus (strain NIES-2133 / IAM M-273 / BP-1).